A 1086-amino-acid polypeptide reads, in one-letter code: Formin-like protein 2 (1086 aa).

A lipid anchor (N-myristoyl glycine) is attached at G2. A GBD/FH3 domain is found at 23-469 (LPMPEPGELE…EAIQRQSTLE (447 aa)). The residue at position 188 (S188) is a Phosphoserine. A disordered region spans residues 513–597 (SVGPTMGAAS…APPLPSAPPL (85 aa)). Positions 525–537 (PLPPPPPPLPPSS) are enriched in pro residues. The segment covering 538–547 (DTPETVQNGP) has biased composition (polar residues). Composition is skewed to pro residues over residues 548 to 576 (VTPPMPPPPPPPPPPPPPPPPPPPPPLPG) and 583 to 597 (PAPPLAPPLPSAPPL). In terms of domain architecture, FH2 spans 616–1007 (IKKPIKTKFR…LMEKLLEQEA (392 aa)). Residues 1040-1079 (NRHVYEGKDGAIEDIITVLKTVPFTARTAKRGSRFFCEPV) form the DAD domain.

Belongs to the formin homology family.

It localises to the cytoplasm. In terms of biological role, plays a role in the regulation of cell morphology and cytoskeletal organization. Required in the cortical actin filament dynamics. This chain is Formin-like protein 2, found in Homo sapiens (Human).